A 419-amino-acid polypeptide reads, in one-letter code: MAASSLEQKLSRLEAKLKQENREARRRIDLNLDISPQRPRPTLQLPLANDGGSRSPSSESSPQHPTPPARPRHMLGLPSTLFTPRSMESIEIDQKLQEIMKQTGYLTIGGQRYQAEINDLENLGEMGSGTCGQVWKMRFRKTGHVIAVKQMRRSGNKEENKRILMDLDVVLKSHDCPYIVQCFGTFITNTDVFIAMELMGTCAEKLKKRMQGPIPERILGKMTVAIVKALYYLKEKHGVIHRDVKPSNILLDERGQIKLCDFGISGRLVDSKAKTRSAGCAAYMAPERIDPPDPTKPDYDIRADVWSLGISLVELATGQFPYKNCKTDFEVLTKVLQEEPPLLPGHMGFSGDFQSFVKDCLTKDHRKRPKYNKLLEHSFIKRYETLEVDVASWFKDVMAKTESPRTSGVLSQPHLPFFR.

Ala-2 bears the N-acetylalanine mark. Residues 2–30 adopt a coiled-coil conformation; that stretch reads AASSLEQKLSRLEAKLKQENREARRRIDL. The span at 18–30 shows a compositional bias: basic and acidic residues; it reads KQENREARRRIDL. A disordered region spans residues 18 to 76; sequence KQENREARRRIDLNLDISPQRPRPTLQLPLANDGGSRSPSSESSPQHPTPPARPRHMLG. Low complexity predominate over residues 36-63; sequence PQRPRPTLQLPLANDGGSRSPSSESSPQ. The segment at 37-57 is d domain; sequence QRPRPTLQLPLANDGGSRSPS. Residues 120–380 enclose the Protein kinase domain; the sequence is LENLGEMGSG…YNKLLEHSFI (261 aa). Residues 126–134 and Lys-149 contribute to the ATP site; that span reads MGSGTCGQV. Asp-243 (proton acceptor) is an active-site residue. Position 271 is a phosphoserine; by MAP3K (Ser-271). Thr-275 carries the phosphothreonine; by MAP3K modification. The DVD domain stretch occupies residues 377–400; sequence HSFIKRYETLEVDVASWFKDVMAK. Ser-411 bears the Phosphoserine mark.

This sequence belongs to the protein kinase superfamily. STE Ser/Thr protein kinase family. MAP kinase kinase subfamily. As to quaternary structure, interacts with isoform 1 of VRK2. Interacts (via its D domain) with its substrates MAPK8/JNK1, MAPK9/JNK2 and MAPK10/JNK3. Interacts (via its DVD domain) with MAP3Ks activators like MAP3K5/ASK1 and MAP3K1/MEKK1. Interacts with MAPK8IP1/JIP1, MAPK8IP2/JIP2 and MAPK8IP3/JIP3 scaffold proteins. Interacts with RASSF7, the interaction promotes phosphorylation. Found in a complex with SH3RF1, RAC1, MAP3K11/MLK3, MAPK8IP1/JIP1 and MAPK8/JNK1. Found in a complex with SH3RF1, RAC2, MAP3K7/TAK1, MAPK8IP1/JIP1, MAPK8/JNK1 and MAPK9/JNK2. The cofactor is Mg(2+). Post-translationally, activated by phosphorylation on Ser-271 and Thr-275 by MAP kinase kinase kinases (MAP3Ks). In terms of tissue distribution, ubiquitous; with highest level of expression in skeletal muscle. Isoform 3 is found at low levels in placenta, fetal liver, and skeletal muscle.

The protein resides in the nucleus. The protein localises to the cytoplasm. The catalysed reaction is L-seryl-[protein] + ATP = O-phospho-L-seryl-[protein] + ADP + H(+). The enzyme catalyses L-threonyl-[protein] + ATP = O-phospho-L-threonyl-[protein] + ADP + H(+). It carries out the reaction L-tyrosyl-[protein] + ATP = O-phospho-L-tyrosyl-[protein] + ADP + H(+). Activated by phosphorylation by specific MAP kinase kinase kinases such as MAP3K1/MEKK1, MAP3K3/MEKK3, MAP3K11/MLK3 and MAP3K12/DLK. Its function is as follows. Dual specificity protein kinase which acts as an essential component of the MAP kinase signal transduction pathway. Essential component of the stress-activated protein kinase/c-Jun N-terminal kinase (SAP/JNK) signaling pathway. With MAP2K4/MKK4, is the one of the only known kinase to directly activate the stress-activated protein kinase/c-Jun N-terminal kinases MAPK8/JNK1, MAPK9/JNK2 and MAPK10/JNK3. MAP2K4/MKK4 and MAP2K7/MKK7 both activate the JNKs by phosphorylation, but they differ in their preference for the phosphorylation site in the Thr-Pro-Tyr motif. MAP2K4/MKK4 shows preference for phosphorylation of the Tyr residue and MAP2K7/MKK7 for the Thr residue. The monophosphorylation of JNKs on the Thr residue is sufficient to increase JNK activity indicating that MAP2K7/MKK7 is important to trigger JNK activity, while the additional phosphorylation of the Tyr residue by MAP2K4/MKK4 ensures optimal JNK activation. Has a specific role in JNK signal transduction pathway activated by pro-inflammatory cytokines. The MKK/JNK signaling pathway is also involved in mitochondrial death signaling pathway, including the release cytochrome c, leading to apoptosis. Part of a non-canonical MAPK signaling pathway, composed of the upstream MAP3K12 kinase and downstream MAP kinases MAPK1/ERK2 and MAPK3/ERK1, that enhances the AP-1-mediated transcription of APP in response to APOE. In Homo sapiens (Human), this protein is Dual specificity mitogen-activated protein kinase kinase 7 (MAP2K7).